Here is a 386-residue protein sequence, read N- to C-terminus: MPTTEADTTPASATLALAFDLLRRHSVTPNDAGCQALMIERLERLGFQVERLRIGEVDNFWATRGETGPLLVFAGHTDVVPTGPESDWQYPPFTPRIDADGMLCGRGAADMKGSLAAMVTAVETFIEAHPDHHGRLGFLITADEEGPAVHGTRAVVEHLREKGVAPDYCIVGEPSSSERLGDTLKNGRRGSLGGTLRVKGVQGHVAYPHLARNPVHEAAPALAALAEAQWDAGNAFFPATSFQISNLQAGTGASNVIPGQLEAVFNFRFSTEVTAEALKARTTEILDRFALDYTIDWTLNGEPFLTTEGALIDATVASVEDVLGYRPQLSTGGGTSDGRFIATLGAQVIELGPVNATIHKVDERIRAADLETLSRLYATIMQRLFT.

His-76 contacts Zn(2+). Asp-78 is an active-site residue. Asp-110 provides a ligand contact to Zn(2+). Glu-144 acts as the Proton acceptor in catalysis. Zn(2+)-binding residues include Glu-145, Glu-173, and His-359.

The protein belongs to the peptidase M20A family. DapE subfamily. Homodimer. It depends on Zn(2+) as a cofactor. The cofactor is Co(2+).

It catalyses the reaction N-succinyl-(2S,6S)-2,6-diaminopimelate + H2O = (2S,6S)-2,6-diaminopimelate + succinate. The protein operates within amino-acid biosynthesis; L-lysine biosynthesis via DAP pathway; LL-2,6-diaminopimelate from (S)-tetrahydrodipicolinate (succinylase route): step 3/3. Its function is as follows. Catalyzes the hydrolysis of N-succinyl-L,L-diaminopimelic acid (SDAP), forming succinate and LL-2,6-diaminopimelate (DAP), an intermediate involved in the bacterial biosynthesis of lysine and meso-diaminopimelic acid, an essential component of bacterial cell walls. The chain is Succinyl-diaminopimelate desuccinylase from Chromohalobacter salexigens (strain ATCC BAA-138 / DSM 3043 / CIP 106854 / NCIMB 13768 / 1H11).